An 86-amino-acid chain; its full sequence is MSQTENAVTSSLSQKRFVRRGKPMTDSEKQMAAVARKRLTHKEIKVFVKNPLKDLMVEYCEREGITQAQFVEKIIKDELQRLDILK.

Over residues 1–14 the composition is skewed to polar residues; sequence MSQTENAVTSSLSQ. Positions 1-31 are disordered; that stretch reads MSQTENAVTSSLSQKRFVRRGKPMTDSEKQM.

In terms of biological role, this protein is involved in the determination of copy number in gene replication. It binds to the repA promoter thus inhibiting the synthesis of the mRNA for the initiator protein RepA. The protein is Replication regulatory protein repA2 (repA2) of Escherichia coli.